We begin with the raw amino-acid sequence, 618 residues long: Camphene synthase, chloroplastic (618 aa).

A chloroplast-targeting transit peptide spans Met1 to Val51. Mg(2+) contacts are provided by Asp369, Asp373, and Asp521. The DDXXD motif motif lies at Asp369–Asp373.

It belongs to the terpene synthase family. Tpsd subfamily. Mg(2+) serves as cofactor. It depends on Mn(2+) as a cofactor. The cofactor is K(+).

It is found in the plastid. The protein resides in the chloroplast. The catalysed reaction is (2E)-geranyl diphosphate = (1S,4R)-camphene + diphosphate. Its pathway is terpene metabolism; oleoresin biosynthesis. In terms of biological role, involved in defensive oleoresin formation in conifers in response to insect attack or other injury. Involved in monoterpene (C10) olefins biosynthesis. The sequence is that of Camphene synthase, chloroplastic (ag6) from Abies grandis (Grand fir).